The chain runs to 239 residues: Ribonuclease 3 (239 aa).

Positions 11–133 (HTAIQKKLGY…MFAAVSFDAD (123 aa)) constitute an RNase III domain. E46 contacts Mg(2+). The active site involves D50. Mg(2+) is bound by residues D119 and E122. E122 is a catalytic residue. One can recognise a DRBM domain in the interval 160-230 (DGKTALQEAL…AKEALKWLEE (71 aa)).

This sequence belongs to the ribonuclease III family. Homodimer. Mg(2+) serves as cofactor.

It is found in the cytoplasm. The enzyme catalyses Endonucleolytic cleavage to 5'-phosphomonoester.. Functionally, digests double-stranded RNA. Involved in the processing of primary rRNA transcript to yield the immediate precursors to the large and small rRNAs (23S and 16S). Processes some mRNAs, and tRNAs when they are encoded in the rRNA operon. Processes pre-crRNA and tracrRNA of type II CRISPR loci if present in the organism. The protein is Ribonuclease 3 of Neisseria gonorrhoeae (strain ATCC 700825 / FA 1090).